The chain runs to 237 residues: tRNA1(Val) (adenine(37)-N6)-methyltransferase (237 aa).

This sequence belongs to the methyltransferase superfamily. tRNA (adenine-N(6)-)-methyltransferase family.

It is found in the cytoplasm. It carries out the reaction adenosine(37) in tRNA1(Val) + S-adenosyl-L-methionine = N(6)-methyladenosine(37) in tRNA1(Val) + S-adenosyl-L-homocysteine + H(+). Its function is as follows. Specifically methylates the adenine in position 37 of tRNA(1)(Val) (anticodon cmo5UAC). This Pasteurella multocida (strain Pm70) protein is tRNA1(Val) (adenine(37)-N6)-methyltransferase.